A 350-amino-acid polypeptide reads, in one-letter code: UDP-glucose 4-epimerase GEPI48 (350 aa).

Position 5–36 (5–36 (TVLVTGGAGYIGSHTVLQLLLGGFKAVVVDNL)) interacts with NAD(+). S130 contributes to the substrate binding site. Catalysis depends on Y154, which acts as the Proton acceptor.

The protein belongs to the NAD(P)-dependent epimerase/dehydratase family. The cofactor is NAD(+).

It catalyses the reaction UDP-alpha-D-glucose = UDP-alpha-D-galactose. The protein operates within carbohydrate metabolism; galactose metabolism. This chain is UDP-glucose 4-epimerase GEPI48, found in Cyamopsis tetragonoloba (Guar).